A 259-amino-acid polypeptide reads, in one-letter code: Enolase-phosphatase E1 (259 aa).

Mg(2+) contacts are provided by Asp-16 and Glu-18. Substrate-binding positions include 151 to 152 (SS) and Lys-185. Asp-210 lines the Mg(2+) pocket.

Belongs to the HAD-like hydrolase superfamily. MasA/MtnC family. In terms of assembly, monomer. It depends on Mg(2+) as a cofactor.

It is found in the cytoplasm. Its subcellular location is the nucleus. The catalysed reaction is 5-methylsulfanyl-2,3-dioxopentyl phosphate + H2O = 1,2-dihydroxy-5-(methylsulfanyl)pent-1-en-3-one + phosphate. It functions in the pathway amino-acid biosynthesis; L-methionine biosynthesis via salvage pathway; L-methionine from S-methyl-5-thio-alpha-D-ribose 1-phosphate: step 3/6. The protein operates within amino-acid biosynthesis; L-methionine biosynthesis via salvage pathway; L-methionine from S-methyl-5-thio-alpha-D-ribose 1-phosphate: step 4/6. Functionally, bifunctional enzyme that catalyzes the enolization of 2,3-diketo-5-methylthiopentyl-1-phosphate (DK-MTP-1-P) into the intermediate 2-hydroxy-3-keto-5-methylthiopentenyl-1-phosphate (HK-MTPenyl-1-P), which is then dephosphorylated to form the acireductone 1,2-dihydroxy-3-keto-5-methylthiopentene (DHK-MTPene). In Xenopus tropicalis (Western clawed frog), this protein is Enolase-phosphatase E1 (enoph1).